The primary structure comprises 66 residues: Large ribosomal subunit protein bL35 (66 aa).

Basic residues-rich tracts occupy residues 1 to 15 (MSKL…KRFK) and 22 to 43 (ILHK…RKRR). The interval 1–43 (MSKLKTRSSAAKRFKVTATGKILHKKAGKRHNLSKKSESRKRR) is disordered.

This sequence belongs to the bacterial ribosomal protein bL35 family.

The sequence is that of Large ribosomal subunit protein bL35 from Dictyoglomus turgidum (strain DSM 6724 / Z-1310).